The following is a 134-amino-acid chain: Large ribosomal subunit protein bL17 (134 aa).

It belongs to the bacterial ribosomal protein bL17 family. In terms of assembly, part of the 50S ribosomal subunit. Contacts protein L32.

The polypeptide is Large ribosomal subunit protein bL17 (Thioalkalivibrio sulfidiphilus (strain HL-EbGR7)).